The sequence spans 136 residues: HTH-type transcriptional regulator CysB (136 aa).

Residues 1 to 59 form the HTH lysR-type domain; it reads MDVRQLRSLVTLVEVRFSVSRAAECLHLVQSAVTQHLKQLEAELGTRLFVRHGKRLVGL. The segment at residues 19–38 is a DNA-binding region (H-T-H motif); the sequence is VSRAAECLHLVQSAVTQHLK.

It belongs to the LysR transcriptional regulatory family.

Functionally, this protein is a positive regulator of gene expression for the cysteine regulon. In Thiocapsa roseopersicina, this protein is HTH-type transcriptional regulator CysB (cysB).